Reading from the N-terminus, the 204-residue chain is MSALEELITKAKALQAEGHTPGQISDELGLSMETVTWLLTQQKGMEAPKDVHIDWAAVGSHGVLLNDMAMMMLKRFLYLEEGGDVRAIEDLPDTVVGIAPSGAPLATLIAAEEGLKLAVYLPAKHSRSEAPTGSLSGTFSAIAAQRCIIVDDVVTTGTTLSETIAFLRQHGATPVAVWSLFDKRGAREIDGVPVHSLFVISRLG.

This sequence belongs to the purine/pyrimidine phosphoribosyltransferase family. GfcR subfamily.

The polypeptide is Transcriptional regulator GfcR (Methanoculleus marisnigri (strain ATCC 35101 / DSM 1498 / JR1)).